We begin with the raw amino-acid sequence, 507 residues long: Arabinose import ATP-binding protein AraG (507 aa).

ABC transporter domains are found at residues 14–249 and 249–505; these read LRFN…MVGR and RDIQ…LPRT. 46–53 provides a ligand contact to ATP; that stretch reads GENGAGKS.

Belongs to the ABC transporter superfamily. Arabinose importer (TC 3.A.1.2.2) family. The complex is composed of two ATP-binding proteins (AraG), two transmembrane proteins (AraH) and a solute-binding protein (AraF).

Its subcellular location is the cell inner membrane. The catalysed reaction is L-arabinose(out) + ATP + H2O = L-arabinose(in) + ADP + phosphate + H(+). In terms of biological role, part of the ABC transporter complex AraFGH involved in arabinose import. Responsible for energy coupling to the transport system. This chain is Arabinose import ATP-binding protein AraG, found in Pseudomonas savastanoi pv. phaseolicola (strain 1448A / Race 6) (Pseudomonas syringae pv. phaseolicola (strain 1448A / Race 6)).